We begin with the raw amino-acid sequence, 338 residues long: Beta-ketoacyl-[acyl-carrier-protein] synthase III (338 aa).

Residues Cys-119 and His-261 contribute to the active site. The ACP-binding stretch occupies residues 262-266 (QANQR). Residue Asn-291 is part of the active site.

It belongs to the thiolase-like superfamily. FabH family. In terms of assembly, homodimer.

The protein resides in the cytoplasm. The catalysed reaction is malonyl-[ACP] + acetyl-CoA + H(+) = 3-oxobutanoyl-[ACP] + CO2 + CoA. It participates in lipid metabolism; fatty acid biosynthesis. Its function is as follows. Catalyzes the condensation reaction of fatty acid synthesis by the addition to an acyl acceptor of two carbons from malonyl-ACP. Catalyzes the first condensation reaction which initiates fatty acid synthesis and may therefore play a role in governing the total rate of fatty acid production. Possesses both acetoacetyl-ACP synthase and acetyl transacylase activities. Its substrate specificity determines the biosynthesis of branched-chain and/or straight-chain of fatty acids. The polypeptide is Beta-ketoacyl-[acyl-carrier-protein] synthase III (Prochlorococcus marinus (strain SARG / CCMP1375 / SS120)).